A 156-amino-acid chain; its full sequence is S-ribosylhomocysteine lyase (156 aa).

Fe cation is bound by residues histidine 56, histidine 60, and cysteine 123.

This sequence belongs to the LuxS family. In terms of assembly, homodimer. It depends on Fe cation as a cofactor.

The enzyme catalyses S-(5-deoxy-D-ribos-5-yl)-L-homocysteine = (S)-4,5-dihydroxypentane-2,3-dione + L-homocysteine. Its function is as follows. Involved in the synthesis of autoinducer 2 (AI-2) which is secreted by bacteria and is used to communicate both the cell density and the metabolic potential of the environment. The regulation of gene expression in response to changes in cell density is called quorum sensing. Catalyzes the transformation of S-ribosylhomocysteine (RHC) to homocysteine (HC) and 4,5-dihydroxy-2,3-pentadione (DPD). The polypeptide is S-ribosylhomocysteine lyase (Staphylococcus aureus (strain Mu3 / ATCC 700698)).